Here is a 343-residue protein sequence, read N- to C-terminus: Lipase chaperone (343 aa).

Residues 7–27 (IYLGIGLVALLMIFIYWLMPK) form a helical membrane-spanning segment.

It belongs to the lipase chaperone family.

It is found in the cell inner membrane. Functionally, may be involved in the folding of the extracellular lipase during its passage through the periplasm. The sequence is that of Lipase chaperone (lifO) from Acinetobacter baylyi (strain ATCC 33305 / BD413 / ADP1).